We begin with the raw amino-acid sequence, 452 residues long: Protein FAM81B (452 aa).

Polar residues-rich tracts occupy residues 1–11 (MQLQFLGTLAS) and 38–55 (IMSSDTNVNKSASPTATA). The tract at residues 1–85 (MQLQFLGTLA…KVRLSPAKMS (85 aa)) is disordered. Coiled-coil stretches lie at residues 164–192 (IQTITSIVKKLSQNIEILEDQIRARDQAA) and 329–452 (LGHI…LQEV).

Belongs to the FAM81 family.

The chain is Protein FAM81B (FAM81B) from Homo sapiens (Human).